We begin with the raw amino-acid sequence, 502 residues long: ATP synthase subunit alpha (502 aa).

169 to 176 (GDRQTGKT) contacts ATP.

Belongs to the ATPase alpha/beta chains family. F-type ATPases have 2 components, CF(1) - the catalytic core - and CF(0) - the membrane proton channel. CF(1) has five subunits: alpha(3), beta(3), gamma(1), delta(1), epsilon(1). CF(0) has three main subunits: a(1), b(2) and c(9-12). The alpha and beta chains form an alternating ring which encloses part of the gamma chain. CF(1) is attached to CF(0) by a central stalk formed by the gamma and epsilon chains, while a peripheral stalk is formed by the delta and b chains.

The protein resides in the cell inner membrane. It catalyses the reaction ATP + H2O + 4 H(+)(in) = ADP + phosphate + 5 H(+)(out). In terms of biological role, produces ATP from ADP in the presence of a proton gradient across the membrane. The alpha chain is a regulatory subunit. The protein is ATP synthase subunit alpha of Pelobacter propionicus (strain DSM 2379 / NBRC 103807 / OttBd1).